Reading from the N-terminus, the 274-residue chain is Thiamine kinase (274 aa).

Belongs to the thiamine kinase family.

The catalysed reaction is thiamine + ATP = thiamine phosphate + ADP + H(+). It participates in cofactor biosynthesis; thiamine diphosphate biosynthesis; thiamine phosphate from thiamine: step 1/1. In terms of biological role, catalyzes the ATP-dependent phosphorylation of thiamine to thiamine phosphate. Is involved in thiamine salvage. The protein is Thiamine kinase of Salmonella typhi.